We begin with the raw amino-acid sequence, 424 residues long: Hemagglutinin-esterase (424 aa).

The first 16 residues, 1-16, serve as a signal peptide directing secretion; it reads MFLLPRFCLVCSIIST. The esterase domain 1 stretch occupies residues 7–127; that stretch reads FCLVCSIIST…NNDIWMQNKG (121 aa). Residues 17-392 lie on the Virion surface side of the membrane; sequence FGFQNPPTNV…PICVYDPLPI (376 aa). Ser-40 serves as the catalytic Nucleophile. Residues Cys-44 and Cys-65 are joined by a disulfide bond. N-linked (GlcNAc...) asparagine; by host glycosylation is found at Asn-54, Asn-89, Asn-153, Asn-236, and Asn-301. Disulfide bonds link Cys-113/Cys-162, Cys-197/Cys-276, and Cys-205/Cys-249. The tract at residues 128-266 is receptor binding; that stretch reads LFYTQVYKKM…GNYLAISNEL (139 aa). Residues 267–379 are esterase domain 2; sequence LLTVPTKAIC…NCPTAASIIS (113 aa). An intrachain disulfide couples Cys-307 to Cys-312. N-linked (GlcNAc...) asparagine; by host glycosylation is present at Asn-316. Residues Asp-326 and His-329 each act as charge relay system in the active site. A disulfide bridge links Cys-347 with Cys-371. Residue Asn-358 is glycosylated (N-linked (GlcNAc...) asparagine; by host). The helical transmembrane segment at 393-413 threads the bilayer; that stretch reads ILLGILLGVAVIVIVVLLLYF. Residues 414-424 are Intravirion-facing; the sequence is MVDNGIRQHYA.

Belongs to the influenza type C/coronaviruses hemagglutinin-esterase family. In terms of assembly, homodimer; disulfide-linked. Forms a complex with the M protein in the pre-Golgi. Associates then with S-M complex to form a ternary complex S-M-HE. Post-translationally, N-glycosylated in the host RER.

It is found in the virion membrane. The protein resides in the host cell membrane. It carries out the reaction N-acetyl-9-O-acetylneuraminate + H2O = N-acetylneuraminate + acetate + H(+). The catalysed reaction is N-acetyl-4-O-acetylneuraminate + H2O = N-acetylneuraminate + acetate + H(+). Its function is as follows. Structural protein that makes short spikes at the surface of the virus. Contains receptor binding and receptor-destroying activities. Mediates de-O-acetylation of N-acetyl-4-O-acetylneuraminic acid, which is probably the receptor determinant recognized by the virus on the surface of erythrocytes and susceptible cells. This receptor-destroying activity is important for virus release as it probably helps preventing self-aggregation and ensures the efficient spread of the progeny virus from cell to cell. May serve as a secondary viral attachment protein for initiating infection, the spike protein being the major one. May become a target for both the humoral and the cellular branches of the immune system. The polypeptide is Hemagglutinin-esterase (Sus scrofa (Pig)).